A 367-amino-acid polypeptide reads, in one-letter code: tRNA (guanine(26)-N(2))-dimethyltransferase (367 aa).

One can recognise a Trm1 methyltransferase domain in the interval 1–365; the sequence is MRVSEGRVTV…ADVVEIREAT (365 aa). Residues arginine 34, arginine 64, aspartate 79, aspartate 105, and alanine 106 each contribute to the S-adenosyl-L-methionine site. Residues cysteine 234, cysteine 237, cysteine 254, and cysteine 257 each contribute to the Zn(2+) site.

Belongs to the class I-like SAM-binding methyltransferase superfamily. Trm1 family.

The enzyme catalyses guanosine(26) in tRNA + 2 S-adenosyl-L-methionine = N(2)-dimethylguanosine(26) in tRNA + 2 S-adenosyl-L-homocysteine + 2 H(+). Its function is as follows. Dimethylates a single guanine residue at position 26 of a number of tRNAs using S-adenosyl-L-methionine as donor of the methyl groups. The sequence is that of tRNA (guanine(26)-N(2))-dimethyltransferase from Haloarcula marismortui (strain ATCC 43049 / DSM 3752 / JCM 8966 / VKM B-1809) (Halobacterium marismortui).